The sequence spans 146 residues: UPF0742 protein PB2B2.17c (146 aa).

Residues 38–60 form a helical membrane-spanning segment; sequence LTVKYCLAVKLLIYLLYCWYIYS.

Belongs to the UPF0742 family.

It is found in the cytoplasm. Its subcellular location is the nucleus membrane. The chain is UPF0742 protein PB2B2.17c from Schizosaccharomyces pombe (strain 972 / ATCC 24843) (Fission yeast).